The sequence spans 95 residues: Histone-like DNA-binding protein (95 aa).

It belongs to the bacterial histone-like protein family.

The sequence is that of Histone-like DNA-binding protein from Rickettsia conorii (strain ATCC VR-613 / Malish 7).